Reading from the N-terminus, the 277-residue chain is MNKEELLGFLLDDSIDSQKRCVTDQQAYSNWLKNDNDERTAHEESSSQSTIAALNKKKQTEAAQEDIEELLNGLEGIIGGADPRNLKSKSKRKTKKGGSKPREENVNTEKHIVMLEVEDFSDMSTHEDVNGASPSPNLDRSKKNEKRRKNAKELSYDELKDKLEVTTRKSRLECKDLKKKVHGLERRNLELEQRLEELKIENQTLIEINNKLLKNTNEDEINKSQRNKEKDRKRRERRTARRKDERKQEKKQEKKQDNKTSQSFPSSTDMNGQPIEF.

2 disordered regions span residues 33–168 (KNDN…VTTR) and 210–277 (NKLL…PIEF). Residues 34–45 (NDNDERTAHEES) are compositionally biased toward basic and acidic residues. Positions 86–99 (LKSKSKRKTKKGGS) are enriched in basic residues. 3 stretches are compositionally biased toward basic and acidic residues: residues 100–113 (KPRE…KHIV), 151–168 (AKEL…VTTR), and 216–230 (TNED…NKEK). Basic residues predominate over residues 231-241 (DRKRRERRTAR). The span at 242–258 (RKDERKQEKKQEKKQDN) shows a compositional bias: basic and acidic residues. Positions 259-271 (KTSQSFPSSTDMN) are enriched in polar residues.

It localises to the cytoplasm. This is an uncharacterized protein from Saccharomyces cerevisiae (strain ATCC 204508 / S288c) (Baker's yeast).